The following is a 328-amino-acid chain: L-lactate dehydrogenase (328 aa).

Residues Val-18, Glu-39, Lys-46, Tyr-71, and 85–86 each bind NAD(+); that span reads GA. Positions 88 and 94 each coordinate substrate. NAD(+) contacts are provided by residues Ser-107, 124–126, and Ser-149; that span reads AAN. Residue 126-129 coordinates substrate; sequence NPVD. 154–157 provides a ligand contact to substrate; the sequence is DSAR. The beta-D-fructose 1,6-bisphosphate site is built by Arg-159 and His-174. His-181 acts as the Proton acceptor in catalysis. A Phosphotyrosine modification is found at Tyr-226. Thr-235 contributes to the substrate binding site.

The protein belongs to the LDH/MDH superfamily. LDH family. As to quaternary structure, homotetramer.

The protein resides in the cytoplasm. It catalyses the reaction (S)-lactate + NAD(+) = pyruvate + NADH + H(+). The protein operates within fermentation; pyruvate fermentation to lactate; (S)-lactate from pyruvate: step 1/1. With respect to regulation, allosterically activated by fructose 1,6-bisphosphate (FBP). Its function is as follows. Catalyzes the conversion of lactate to pyruvate. The polypeptide is L-lactate dehydrogenase (Streptococcus pneumoniae (strain 70585)).